An 848-amino-acid chain; its full sequence is Trimethylamine-N-oxide reductase 1 (848 aa).

A signal peptide (tat-type signal) is located at residues 1 to 39; it reads MNNNDLFQASRRRFLAQLGGLTVAGMLGTSLLTPRRATA. S191 is a Mo-bis(molybdopterin guanine dinucleotide) binding site.

Belongs to the prokaryotic molybdopterin-containing oxidoreductase family. It depends on Mo-bis(molybdopterin guanine dinucleotide) as a cofactor. In terms of processing, predicted to be exported by the Tat system. The position of the signal peptide cleavage has not been experimentally proven.

It localises to the periplasm. It carries out the reaction trimethylamine + 2 Fe(III)-[cytochrome c] + H2O = trimethylamine N-oxide + 2 Fe(II)-[cytochrome c] + 3 H(+). In terms of biological role, reduces trimethylamine-N-oxide (TMAO) into trimethylamine; an anaerobic reaction coupled to energy-yielding reactions. This is Trimethylamine-N-oxide reductase 1 (torA) from Escherichia coli O6:H1 (strain CFT073 / ATCC 700928 / UPEC).